A 493-amino-acid polypeptide reads, in one-letter code: NAD(P)H-quinone oxidoreductase chain 4, chloroplastic (493 aa).

The next 14 membrane-spanning stretches (helical) occupy residues 4–24 (FPWLSIIILFPLFAAFFIPLL), 34–54 (WYTLGICLLDFLVMSYIFGYY), 87–107 (MGLILLTGLVTTLAVLAAWPI), 111–131 (PKLFYFLMLVMYSGQIGLFTS), 134–154 (LFLFFLMWELELIPIYLLISL), 167–187 (FIFYTAIGSLFLFIATFTVCF), 212–232 (ILYLGFGFAYAVKLPIIPFHT), 242–262 (HYSTCMLLAGILLKMGGYGWI), 276–296 (FAPWLVILGTVQIIYAASVCL), 313–333 (MGFVLIGICSFTNIGLSGAIC), 334–354 (QMISHGLIGASLFFLAGTTYD), 385–405 (SLALPTMSGFVAEMMIFLGII), 417–437 (FIILFQALGVILTPIYLLSML), and 462–482 (VFIIVSLFIPVIIIGLYPNIL).

Belongs to the complex I subunit 4 family.

The protein localises to the plastid. It localises to the chloroplast thylakoid membrane. It catalyses the reaction a plastoquinone + NADH + (n+1) H(+)(in) = a plastoquinol + NAD(+) + n H(+)(out). It carries out the reaction a plastoquinone + NADPH + (n+1) H(+)(in) = a plastoquinol + NADP(+) + n H(+)(out). This is NAD(P)H-quinone oxidoreductase chain 4, chloroplastic from Chara vulgaris (Common stonewort).